An 88-amino-acid polypeptide reads, in one-letter code: MAEAEKTVRTLTGRVVSDKMDKTITVLIERRVKHPIYGKYVKRSTKLHAHDETNQCHIGDKVTIRETRPMAKTKSWALVDVLERAVEV.

It belongs to the universal ribosomal protein uS17 family. In terms of assembly, part of the 30S ribosomal subunit.

Functionally, one of the primary rRNA binding proteins, it binds specifically to the 5'-end of 16S ribosomal RNA. The polypeptide is Small ribosomal subunit protein uS17 (Pseudomonas fluorescens (strain ATCC BAA-477 / NRRL B-23932 / Pf-5)).